We begin with the raw amino-acid sequence, 289 residues long: Purine nucleoside phosphorylase (289 aa).

N-acetylmethionine is present on M1. Phosphate-binding positions include S33, H64, and R84–H86. Residue Y88 coordinates a purine D-ribonucleoside. Residue A116 coordinates phosphate. The a purine D-ribonucleoside site is built by E201 and M219. A phosphate-binding site is contributed by S220. N243 lines the a purine D-ribonucleoside pocket. S251 carries the phosphoserine modification. H257 provides a ligand contact to a purine D-ribonucleoside.

The protein belongs to the PNP/MTAP phosphorylase family. Homotrimer. In terms of tissue distribution, expressed in red blood cells; overexpressed in red blood cells (cytoplasm) of patients with hereditary non-spherocytic hemolytic anemia of unknown etiology.

The protein localises to the cytoplasm. It catalyses the reaction inosine + phosphate = alpha-D-ribose 1-phosphate + hypoxanthine. It carries out the reaction guanosine + phosphate = alpha-D-ribose 1-phosphate + guanine. The catalysed reaction is 2'-deoxyguanosine + phosphate = 2-deoxy-alpha-D-ribose 1-phosphate + guanine. The enzyme catalyses 2'-deoxyinosine + phosphate = 2-deoxy-alpha-D-ribose 1-phosphate + hypoxanthine. The protein operates within purine metabolism; purine nucleoside salvage. Inhibited by 5'-deaza-1'-aza-2c-deoxy-1'-(9-methylene)-Immucilin-G (DADMe-ImmG). Its function is as follows. Catalyzes the phosphorolytic breakdown of the N-glycosidic bond in the beta-(deoxy)ribonucleoside molecules, with the formation of the corresponding free purine bases and pentose-1-phosphate. Preferentially acts on 6-oxopurine nucleosides including inosine and guanosine. The polypeptide is Purine nucleoside phosphorylase (PNP) (Homo sapiens (Human)).